Here is a 393-residue protein sequence, read N- to C-terminus: (S)-mandelate dehydrogenase (393 aa).

One can recognise an FMN hydroxy acid dehydrogenase domain in the interval 1–377; the sequence is MSQNLFNVED…SPDYLQNEGV (377 aa). Residue tyrosine 26 coordinates (S)-mandelate. Residues 79–81, serine 108, and glutamine 129 each bind FMN; that span reads PTG. Position 131 (tyrosine 131) interacts with (S)-mandelate. Threonine 156 provides a ligand contact to FMN. Arginine 165 contacts (S)-mandelate. Lysine 250 is a binding site for FMN. Positions 274 and 277 each coordinate (S)-mandelate. Histidine 274 acts as the Proton acceptor in catalysis. FMN-binding positions include 303 to 307 and 326 to 327; these read DSGFR and GR.

It belongs to the FMN-dependent alpha-hydroxy acid dehydrogenase family. In terms of assembly, homotetramer. FMN serves as cofactor.

It localises to the cell inner membrane. The catalysed reaction is (S)-mandelate + A = phenylglyoxylate + AH2. The protein operates within aromatic compound metabolism; (R)-mandelate degradation; benzoate from (R)-mandelate: step 2/4. Its function is as follows. Catalyzes the dehydrogenation of (S)-mandelate to phenylglyoxylate (benzoylformate). Is likely involved in the utilization of mandelate as a sole source of carbon and energy for growth. Active in vitro with the artificial electron acceptors 2,6-dichlorophenolindophenol (DCPIP) or ferricyanide, but in vivo most likely transfer the electron pair from the reduced flavin to a component of the electron transport chain in the membrane, possibly a quinone. Shows very low activity with oxygen as the electron acceptor, and also with 3-indolelactate and medium chain 2-hydroxyacids as substrates. In Pseudomonas putida (Arthrobacter siderocapsulatus), this protein is (S)-mandelate dehydrogenase.